A 465-amino-acid polypeptide reads, in one-letter code: ATP-dependent protease ATPase subunit HslU (465 aa).

ATP contacts are provided by residues Val-19 and 61–66 (GVGKTE). A disordered region spans residues 153–175 (LFQSDGSDGDDETTEQDSHDEIR). Asp-279, Glu-343, and Arg-415 together coordinate ATP.

It belongs to the ClpX chaperone family. HslU subfamily. As to quaternary structure, a double ring-shaped homohexamer of HslV is capped on each side by a ring-shaped HslU homohexamer. The assembly of the HslU/HslV complex is dependent on binding of ATP.

The protein resides in the cytoplasm. Its function is as follows. ATPase subunit of a proteasome-like degradation complex; this subunit has chaperone activity. The binding of ATP and its subsequent hydrolysis by HslU are essential for unfolding of protein substrates subsequently hydrolyzed by HslV. HslU recognizes the N-terminal part of its protein substrates and unfolds these before they are guided to HslV for hydrolysis. In Oceanobacillus iheyensis (strain DSM 14371 / CIP 107618 / JCM 11309 / KCTC 3954 / HTE831), this protein is ATP-dependent protease ATPase subunit HslU.